The chain runs to 77 residues: U8-lycotoxin-Ls1e (77 aa).

The N-terminal stretch at 1-20 (MKLIIFTGLVLFAIVSLIEA) is a signal peptide. The propeptide occupies 21–26 (QAENEK).

Belongs to the neurotoxin 19 (CSTX) family. 08 (U8-Lctx) subfamily. In terms of processing, contains 4 disulfide bonds. Expressed by the venom gland.

The protein resides in the secreted. The sequence is that of U8-lycotoxin-Ls1e from Lycosa singoriensis (Wolf spider).